The chain runs to 246 residues: Ribonuclease PH (246 aa).

Phosphate contacts are provided by residues Arg-86 and 124–126 (GTR).

The protein belongs to the RNase PH family. Homohexameric ring arranged as a trimer of dimers.

It catalyses the reaction tRNA(n+1) + phosphate = tRNA(n) + a ribonucleoside 5'-diphosphate. Functionally, phosphorolytic 3'-5' exoribonuclease that plays an important role in tRNA 3'-end maturation. Removes nucleotide residues following the 3'-CCA terminus of tRNAs; can also add nucleotides to the ends of RNA molecules by using nucleoside diphosphates as substrates, but this may not be physiologically important. Probably plays a role in initiation of 16S rRNA degradation (leading to ribosome degradation) during starvation. The sequence is that of Ribonuclease PH from Bacillus licheniformis (strain ATCC 14580 / DSM 13 / JCM 2505 / CCUG 7422 / NBRC 12200 / NCIMB 9375 / NCTC 10341 / NRRL NRS-1264 / Gibson 46).